A 285-amino-acid chain; its full sequence is Glutamate racemase (285 aa).

Substrate-binding positions include Asp-28–Ser-29 and Tyr-60–Gly-61. Residue Cys-92 is the Proton donor/acceptor of the active site. Asn-93–Thr-94 serves as a coordination point for substrate. The active-site Proton donor/acceptor is the Cys-204. Residue Thr-205 to His-206 coordinates substrate.

Belongs to the aspartate/glutamate racemases family.

It catalyses the reaction L-glutamate = D-glutamate. The protein operates within cell wall biogenesis; peptidoglycan biosynthesis. Functionally, provides the (R)-glutamate required for cell wall biosynthesis. The polypeptide is Glutamate racemase (Escherichia fergusonii (strain ATCC 35469 / DSM 13698 / CCUG 18766 / IAM 14443 / JCM 21226 / LMG 7866 / NBRC 102419 / NCTC 12128 / CDC 0568-73)).